We begin with the raw amino-acid sequence, 249 residues long: Triosephosphate isomerase (249 aa).

Asn12–Lys14 contributes to the substrate binding site. Catalysis depends on His96, which acts as the Electrophile. The active-site Proton acceptor is Glu166. Substrate is bound by residues Gly172, Ser211, and Gly232–Gly233.

It belongs to the triosephosphate isomerase family. Homodimer.

It localises to the cytoplasm. It carries out the reaction D-glyceraldehyde 3-phosphate = dihydroxyacetone phosphate. It participates in carbohydrate biosynthesis; gluconeogenesis. The protein operates within carbohydrate degradation; glycolysis; D-glyceraldehyde 3-phosphate from glycerone phosphate: step 1/1. Involved in the gluconeogenesis. Catalyzes stereospecifically the conversion of dihydroxyacetone phosphate (DHAP) to D-glyceraldehyde-3-phosphate (G3P). This is Triosephosphate isomerase from Xanthobacter flavus.